A 371-amino-acid polypeptide reads, in one-letter code: uncharacterized protein (371 aa).

Positions 287–323 form a coiled coil; that stretch reads EVVTALDRYRQHLRETRERLEEKQGKLLEELKGYESM.

This is an uncharacterized protein from Aspergillus fumigatus (strain ATCC MYA-4609 / CBS 101355 / FGSC A1100 / Af293) (Neosartorya fumigata).